A 491-amino-acid chain; its full sequence is Diacylglycerol O-acyltransferase 1 (491 aa).

The interval 1-60 is disordered; the sequence is MGDRGGAGGTRRRRTGSRPSSHGGGGPAAAEEEVRDAAAGPDMGAAGDAPAPAPSKDADD. Residues 1–86 lie on the Cytoplasmic side of the membrane; that stretch reads MGDRGGAGGT…SLFSSDSGFN (86 aa). The interval 1 to 94 is involved in homomerization; the sequence is MGDRGGAGGT…FNNYRGILNW (94 aa). Serine 20 and serine 21 each carry phosphoserine. A compositionally biased stretch (low complexity) spans 37–50; the sequence is AAAGPDMGAAGDAP. A helical membrane pass occupies residues 87-121; it reads NYRGILNWCVVMLILSNARLFLENLIKYGILVDPI. Residues 122–133 lie on the Lumenal side of the membrane; that stretch reads QVVSLFLKDPYS. Residues 122–133 form an extracellular loop 1 (EL1) region; the sequence is QVVSLFLKDPYS. A helical membrane pass occupies residues 134–159; the sequence is WPAPCLVIAANVFAVAAFQVEKRLAV. Residues 134–491 are MBOAT fold; sequence WPAPCLVIAA…LNYEAPVAGA (358 aa). Topologically, residues 160 to 164 are cytoplasmic; that stretch reads GALTE. Residues 165-187 form a helical membrane-spanning segment; that stretch reads QAGLLLHVANLATILCFPAAVVL. Residues 188–194 are Lumenal-facing; the sequence is LVESITP. Residues 195–226 traverse the membrane as a helical segment; it reads VGSLLALMVHTILFLKLFSYRDVNLWCRRARA. Topologically, residues 227 to 276 are cytoplasmic; the sequence is KAASAGKRASSAAAPHTVSYPDNLTYRDLYYFLFAPTLCYELNFPRSPRI. Residues 227–279 are intracellular loop 1 (IL1); sequence KAASAGKRASSAAAPHTVSYPDNLTYRDLYYFLFAPTLCYELNFPRSPRIRKR. The chain crosses the membrane as a helical span at residues 277 to 311; it reads RKRFLLRRILEMLFFTQLQVGLIQQWMVPTIQNSM. At 312 to 318 the chain is on the lumenal side; it reads KPFKDMD. The helical transmembrane segment at 319–356 threads the bilayer; it reads YSRIIERLLKLAVPNHLIWLIFFYWLFHSCLNAVAELM. The Cytoplasmic segment spans residues 357–402; the sequence is QFGDREFYRDWWNSESVTYFWQNWNIPVHKWCIRHFYKPMLRRGSS. The segment at 357 to 402 is intracellular loop 2 (IL2); it reads QFGDREFYRDWWNSESVTYFWQNWNIPVHKWCIRHFYKPMLRRGSS. The FYXDWWN motif motif lies at 363-369; sequence FYRDWWN. An acyl-CoA-binding positions include 377–385, tyrosine 393, and arginine 407; that span reads WQNWNIPVH. The tract at residues 383–397 is amphipathic helix (AH); the sequence is PVHKWCIRHFYKPML. The chain crosses the membrane as a helical span at residues 403-423; sequence RWMARIGVFLASAFFHEYLVS. Histidine 418 is an active-site residue. The Lumenal segment spans residues 424 to 431; that stretch reads VPLRMFRL. A helical membrane pass occupies residues 432 to 450; sequence WAFTGMMAQIPLAWFVGRF. The Cytoplasmic segment spans residues 451-452; that stretch reads FQ. Residues 453-484 form a helical membrane-spanning segment; that stretch reads GNYGNAAVWLTLIIGQPIAVLMYVHDYYVLNY. Tyrosine 480 contributes to the an acyl-CoA binding site. Residues 485 to 491 lie on the Lumenal side of the membrane; sequence EAPVAGA.

The protein belongs to the membrane-bound acyltransferase family. Sterol o-acyltransferase subfamily. Homodimer or homotetramer; both forms have similar enzymatic activities.

It is found in the endoplasmic reticulum membrane. It carries out the reaction an acyl-CoA + a 1,2-diacyl-sn-glycerol = a triacyl-sn-glycerol + CoA. The enzyme catalyses all-trans-retinol + an acyl-CoA = an all-trans-retinyl ester + CoA. The catalysed reaction is 2-(9Z-octadecenoyl)-glycerol + (9Z)-octadecenoyl-CoA = 1,2-di-(9Z-octadecenoyl)-sn-glycerol + CoA. It catalyses the reaction 1,2-di-(9Z-octadecenoyl)-sn-glycerol + (9Z)-octadecenoyl-CoA = 1,2,3-tri-(9Z-octadecenoyl)-glycerol + CoA. It carries out the reaction all-trans-retinol + hexadecanoyl-CoA = all-trans-retinyl hexadecanoate + CoA. The enzyme catalyses 1-O-(9Z-octadecenyl)-glycerol + (9Z)-octadecenoyl-CoA = 1-O-(9Z-octadecyl)-3-(9Z-octadecenoyl)-glycerol + CoA. The catalysed reaction is 1-O-(9Z-octadecyl)-3-(9Z-octadecenoyl)-glycerol + (9Z)-octadecenoyl-CoA = 1-O-(9Z-octadecenyl)-2,3-di-(9Z-octadecenoyl)glycerol + CoA. It catalyses the reaction 1-(9Z-octadecenoyl)-glycerol + (9Z)-octadecenoyl-CoA = 1,2-di-(9Z-octadecenoyl)-glycerol + CoA. It carries out the reaction 1,2-di-(9Z-octadecenoyl)-glycerol + (9Z)-octadecenoate + H(+) = 1,2,3-tri-(9Z-octadecenoyl)-glycerol + H2O. The enzyme catalyses 1-octadecanoyl-2-(5Z,8Z,11Z,14Z-eicosatetraenoyl)-sn-glycerol + (9Z)-octadecenoyl-CoA = 1-octadecanoyl-2-(5Z,8Z,11Z,14Z)-eicosatetraenoyl-3-(9Z)-octadecenoyl-sn-glycerol + CoA. The catalysed reaction is hexadecane-1,2-diol + 2 hexadecanoyl-CoA = 1,2-O,O-dihexadecanoyl-1,2-hexadecanediol + 2 CoA. It catalyses the reaction hexadecane-1,2-diol + hexadecanoyl-CoA = 2-hydroxyhexadecyl hexadecanoate + CoA. It carries out the reaction 2-(9Z-octadecenoyl)-glycerol + hexadecanoyl-CoA = 1-hexadecanoyl-2-(9Z-octadecenoyl)-sn-glycerol + CoA. The enzyme catalyses 1,2-di-(9Z-octadecenoyl)-sn-glycerol + hexadecanoyl-CoA = 1,2-di-(9Z)-octadecenoyl-3-hexadecanoyl-sn-glycerol + CoA. The catalysed reaction is hexadecan-1-ol + hexadecanoyl-CoA = hexadecanyl hexadecanoate + CoA. It catalyses the reaction 13-cis-retinol + hexadecanoyl-CoA = 13-cis-retinyl hexadecanoate + CoA. It carries out the reaction 1,3-di-(9Z-octadecenoyl)-glycerol + (9Z)-octadecenoyl-CoA = 1,2,3-tri-(9Z-octadecenoyl)-glycerol + CoA. The enzyme catalyses 2,3-di-(9Z)-octadecenoyl-sn-glycerol + (9Z)-octadecenoyl-CoA = 1,2,3-tri-(9Z-octadecenoyl)-glycerol + CoA. It participates in lipid metabolism; glycerolipid metabolism. Functionally, catalyzes the terminal and only committed step in triacylglycerol synthesis by using diacylglycerol and fatty acyl CoA as substrates. Highly expressed in epithelial cells of the small intestine and its activity is essential for the absorption of dietary fats. In liver, plays a role in esterifying exogenous fatty acids to glycerol, and is required to synthesize fat for storage. Also present in female mammary glands, where it produces fat in the milk. May be involved in VLDL (very low density lipoprotein) assembly. In contrast to DGAT2 it is not essential for survival. Functions as the major acyl-CoA retinol acyltransferase (ARAT) in the skin, where it acts to maintain retinoid homeostasis and prevent retinoid toxicity leading to skin and hair disorders. Exhibits additional acyltransferase activities, includin acyl CoA:monoacylglycerol acyltransferase (MGAT), wax monoester and wax diester synthases. Also able to use 1-monoalkylglycerol (1-MAkG) as an acyl acceptor for the synthesis of monoalkyl-monoacylglycerol (MAMAG). In Chlorocebus aethiops (Green monkey), this protein is Diacylglycerol O-acyltransferase 1 (DGAT1).